The primary structure comprises 344 residues: Dihydroorotate dehydrogenase (quinone) (344 aa).

Residues 61-65 and threonine 85 contribute to the FMN site; that span reads AGLDK. Lysine 65 is a substrate binding site. 110-114 is a binding site for substrate; that stretch reads NRMGF. 2 residues coordinate FMN: asparagine 138 and asparagine 171. Asparagine 171 contributes to the substrate binding site. Serine 174 acts as the Nucleophile in catalysis. Asparagine 176 contributes to the substrate binding site. FMN-binding residues include lysine 216 and threonine 244. Residue 245–246 coordinates substrate; it reads NT. FMN-binding positions include glycine 267, glycine 296, and 317–318; that span reads YS.

The protein belongs to the dihydroorotate dehydrogenase family. Type 2 subfamily. In terms of assembly, monomer. FMN serves as cofactor.

Its subcellular location is the cell membrane. The catalysed reaction is (S)-dihydroorotate + a quinone = orotate + a quinol. It participates in pyrimidine metabolism; UMP biosynthesis via de novo pathway; orotate from (S)-dihydroorotate (quinone route): step 1/1. In terms of biological role, catalyzes the conversion of dihydroorotate to orotate with quinone as electron acceptor. This Psychrobacter arcticus (strain DSM 17307 / VKM B-2377 / 273-4) protein is Dihydroorotate dehydrogenase (quinone).